We begin with the raw amino-acid sequence, 296 residues long: Cytidine deaminase (296 aa).

CMP/dCMP-type deaminase domains are found at residues 47–167 (TEAE…FGPK) and 186–296 (DSSD…VDPV). 88 to 90 (NLE) lines the substrate pocket. H101 contributes to the Zn(2+) binding site. The active-site Proton donor is the E103. The Zn(2+) site is built by C128 and C131.

It belongs to the cytidine and deoxycytidylate deaminase family. Homodimer. The cofactor is Zn(2+).

It carries out the reaction cytidine + H2O + H(+) = uridine + NH4(+). It catalyses the reaction 2'-deoxycytidine + H2O + H(+) = 2'-deoxyuridine + NH4(+). Its function is as follows. This enzyme scavenges exogenous and endogenous cytidine and 2'-deoxycytidine for UMP synthesis. This chain is Cytidine deaminase, found in Shewanella sp. (strain MR-4).